A 585-amino-acid polypeptide reads, in one-letter code: MSQMLHIEIPNFGNTVLGCLNEQRLLGLYCDVSIVVKGQAFKAHRAVLAASSLYFRDLFSGNSKSAFELPGTVPPACFQQILSFCYTGKLTMAASEQLVVMYTAGFLQIQHIVERGTDLMFKVSSPHCDSQTAMIEDASSEPQSPCNQLQPATAAYATSPSVPIPLLTRVKHEAMEMPPATGPGLASKRPLDTGPRDGVAVATGAAGTPGTAPLKLPRVSYYGVPSLATLIPSIQQVPYPQGERTSPGASSLPTTDSSTSYHNEDEDDDEAYDTMVEEQYGQMYIKATGNYAVQEKPEPVPLESRSCVLIRRDLVALPASLISQIGYRCHPKLYSEGDPGEKLELVAGSGVYITRGQLMNCHLCAGVKHKVLLRRLLATFFDRNTLANSCGTGIRSSTSDPSRKPLDSRVLNAVKLYCQNFAPSFKESEMNVIAADMCTNARRVRKRWLPKIKSMLPEGVEMYRSVMGASAASLPLDPEFPSAASQVFEQRIYAERRNDAATIVALRTDAVNVDLSTSANPAFEANEEVDGAGSVIQEVAAPEQLPADGQSSPQAFEQGNTSSSRPQTPVATATRRPEGTYAGTL.

Residues 30–94 enclose the BTB domain; sequence CDVSIVVKGQ…CYTGKLTMAA (65 aa). Residues Lys-171 and Lys-215 each participate in a glycyl lysine isopeptide (Lys-Gly) (interchain with G-Cter in SUMO2) cross-link. The span at 238–261 shows a compositional bias: polar residues; that stretch reads PYPQGERTSPGASSLPTTDSSTSY. The disordered stretch occupies residues 238–269; it reads PYPQGERTSPGASSLPTTDSSTSYHNEDEDDD. Residues Lys-296, Lys-426, and Lys-453 each participate in a glycyl lysine isopeptide (Lys-Gly) (interchain with G-Cter in SUMO2) cross-link. Positions 348–445 constitute a BEN domain; the sequence is GSGVYITRGQ…DMCTNARRVR (98 aa). The segment at 541 to 585 is disordered; that stretch reads APEQLPADGQSSPQAFEQGNTSSSRPQTPVATATRRPEGTYAGTL. Residues 549–571 are compositionally biased toward polar residues; the sequence is GQSSPQAFEQGNTSSSRPQTPVA.

Homooligomer; mediated by the BTB domain. Interacts with the NuRD complex. Interacts (via C-terminal part) with HDAC2. Interacts (via BTB domain) with MTA1, MTA2 and MTA3.

It localises to the nucleus. Functionally, functions as a transcriptional repressor through its association with the NuRD complex. Recruits the NuRD complex to the promoter of MDM2, leading to the repression of MDM2 transcription and subsequent stability of p53/TP53. This chain is Nucleus accumbens-associated protein 2 (Nacc2), found in Rattus norvegicus (Rat).